The chain runs to 128 residues: Mite group 2 allergen Gly d 2.01 (128 aa).

It belongs to the NPC2 family.

Its subcellular location is the secreted. In Glycyphagus domesticus (House itch mite), this protein is Mite group 2 allergen Gly d 2.01.